A 1154-amino-acid polypeptide reads, in one-letter code: Serine-aspartate repeat-containing protein E (1154 aa).

An N-terminal signal peptide occupies residues 1–52; sequence MINRDNKKAITKKGMISNRLNKFSIRKYTVGTASILVGTTLIFGLGNQEAKA. Residues 23–34 carry the YSIRK-G/S signaling motif motif; sequence FSIRKYTVGTAS. The interval 53 to 606 is ligand binding A region; that stretch reads AENTSTENAK…GDGTVKPEEK (554 aa). Positions 54–230 are disordered; that stretch reads ENTSTENAKQ…SKEELKNNPE (177 aa). Positions 61–75 are enriched in basic and acidic residues; sequence AKQDDATTSDNKEVV. A compositionally biased stretch (low complexity) spans 77–90; that stretch reads ETENNSTTENNSTN. Positions 92–108 are enriched in basic and acidic residues; it reads IKKETNTDSQPEAKKES. Residues 118–129 are compositionally biased toward polar residues; that stretch reads NNVTATTETKPQ. Residues 130-145 are compositionally biased toward basic and acidic residues; the sequence is NIEKENVKPSTDKTAT. A compositionally biased stretch (low complexity) spans 166–178; that stretch reads TTKPSTSEPSTSE. Positions 179–212 are enriched in polar residues; that stretch reads IQTKPTTPQESTNIENSQPQPTPSKVDNQVTDAT. The segment covering 221 to 230 has biased composition (basic and acidic residues); sequence SKEELKNNPE. CNA-B domains lie at 607-719, 720-829, and 830-940; these read LYKI…YKEP, KYNL…YKTP, and KYSL…EEDT. Residues 904-1129 form a disordered region; the sequence is VTNTTEDDKD…TGSENNGSNN (226 aa). Composition is skewed to acidic residues over residues 908 to 918 and 935 to 1093; these read TEDDKDADGGE and YFEE…DSDS. The LPXTG sorting signal motif lies at 1117–1121; that stretch reads LPETG. Thr1120 carries the pentaglycyl murein peptidoglycan amidated threonine modification. A propeptide spans 1121–1154 (removed by sortase); it reads GSENNGSNNATLFGGLFAALGSLLLFGRRKKQNK.

Belongs to the serine-aspartate repeat-containing protein (SDr) family. In terms of assembly, interacts with host complement factor H/CFAH (via C-terminus). Interacts with host complement regulator C4BPA.

The protein resides in the secreted. Its subcellular location is the cell wall. Its function is as follows. Cell surface-associated calcium-binding protein which plays an important role in adhesion and pathogenesis. Contributes to the resistance to killing by innate immune components in blood and thus attenuates bacterial clearance by interacting with host complement factor H/CFAH and modulating its activity. Also inhibits bacterial opsonization and killing by interacting with host complement regulator C4BPA and thus inhibiting classical complement pathway activation. This is Serine-aspartate repeat-containing protein E (sdrE) from Staphylococcus aureus (strain USA300).